The sequence spans 234 residues: Proteasome subunit alpha type-2 (234 aa).

Ala-2 carries the post-translational modification N-acetylalanine. At Tyr-6 the chain carries Phosphotyrosine. Residues Ser-7, Ser-14, and Ser-16 each carry the phosphoserine modification. Phosphotyrosine is present on Tyr-24. N6-acetyllysine is present on Lys-70. Residues Tyr-76 and Tyr-121 each carry the phosphotyrosine modification. At Lys-171 the chain carries N6-acetyllysine.

This sequence belongs to the peptidase T1A family. The 26S proteasome consists of a 20S proteasome core and two 19S regulatory subunits. The 20S proteasome core is a barrel-shaped complex made of 28 subunits that are arranged in four stacked rings. The two outer rings are each formed by seven alpha subunits, and the two inner rings are formed by seven beta subunits. The proteolytic activity is exerted by three beta-subunits PSMB5, PSMB6 and PSMB7. Phosphorylated on tyrosine residues; which may be important for nuclear import. Detected in liver (at protein level).

Its subcellular location is the cytoplasm. It localises to the nucleus. Its function is as follows. Component of the 20S core proteasome complex involved in the proteolytic degradation of most intracellular proteins. This complex plays numerous essential roles within the cell by associating with different regulatory particles. Associated with two 19S regulatory particles, forms the 26S proteasome and thus participates in the ATP-dependent degradation of ubiquitinated proteins. The 26S proteasome plays a key role in the maintenance of protein homeostasis by removing misfolded or damaged proteins that could impair cellular functions, and by removing proteins whose functions are no longer required. Associated with the PA200 or PA28, the 20S proteasome mediates ubiquitin-independent protein degradation. This type of proteolysis is required in several pathways including spermatogenesis (20S-PA200 complex) or generation of a subset of MHC class I-presented antigenic peptides (20S-PA28 complex). This Mus musculus (Mouse) protein is Proteasome subunit alpha type-2 (Psma2).